The following is a 213-amino-acid chain: High frequency lysogenization protein HflD (213 aa).

A coiled-coil region spans residues 79–126; that stretch reads QGLNAELTRYTLSLMVLERKLSSAKGALDTLGNRINGLQRQLEHFDLQ.

Belongs to the HflD family. As to quaternary structure, interacts with CII protein from phage lambda.

It localises to the cytoplasm. The protein resides in the cell inner membrane. Negative regulator of phage lambda lysogenization. Contributes to the degradation of the phage regulatory protein CII. Acts probably by holding CII on the membrane surface, away from the target promoters, but close to the FtsH protease. This chain is High frequency lysogenization protein HflD, found in Escherichia coli O127:H6 (strain E2348/69 / EPEC).